A 498-amino-acid polypeptide reads, in one-letter code: Diacylglycerol O-acyltransferase 1 (498 aa).

A disordered region spans residues 1 to 66 (MGDRGGAGSS…AHTRDKDGRT (66 aa)). The Cytoplasmic portion of the chain corresponds to 1 to 92 (MGDRGGAGSS…SLFSSDSGFS (92 aa)). The involved in homomerization stretch occupies residues 1 to 100 (MGDRGGAGSS…FSNYRGILNW (100 aa)). A Phosphoserine modification is found at serine 20. The helical transmembrane segment at 93-127 (NYRGILNWCVVMLILSNARLFLENLIKYGILVDPI) threads the bilayer. The Lumenal portion of the chain corresponds to 128-139 (QVVSLFLKDPYS). The segment at 128–139 (QVVSLFLKDPYS) is extracellular loop 1 (EL1). A helical membrane pass occupies residues 140–165 (WPAPCVIIASNIFVVAAFQIEKRLAV). The segment at 140 to 498 (WPAPCVIIAS…VLNYDAPVGV (359 aa)) is MBOAT fold. Residues 166 to 170 (GALTE) are Cytoplasmic-facing. Residues 171-193 (QMGLLLHVVNLATIICFPAAVAL) form a helical membrane-spanning segment. The Lumenal portion of the chain corresponds to 194 to 200 (LVESITP). The helical transmembrane segment at 201-232 (VGSVFALASYSIMFLKLYSYRDVNLWCRQRRV) threads the bilayer. At 233–284 (KAKAVSTGKKVSGAAAQQAVSYPDNLTYRDLYYFIFAPTLCYELNFPRSPRI) the chain is on the cytoplasmic side. The segment at 235–287 (KAVSTGKKVSGAAAQQAVSYPDNLTYRDLYYFIFAPTLCYELNFPRSPRIRKR) is intracellular loop 1 (IL1). The helical transmembrane segment at 285–319 (RKRFLLRRVLEMLFFTQLQVGLIQQWMVPTIQNSM) threads the bilayer. Residues 320 to 326 (KPFKDMD) lie on the Lumenal side of the membrane. Residues 327 to 364 (YSRIIERLLKLAVPNHLIWLIFFYWFFHSCLNAVAELL) traverse the membrane as a helical segment. Topologically, residues 365–410 (QFGDREFYRDWWNAESVTYFWQNWNIPVHKWCIRHFYKPMLRHGSS) are cytoplasmic. Residues 365 to 410 (QFGDREFYRDWWNAESVTYFWQNWNIPVHKWCIRHFYKPMLRHGSS) form an intracellular loop 2 (IL2) region. The FYXDWWN motif signature appears at 371 to 377 (FYRDWWN). An acyl-CoA-binding positions include 385–393 (WQNWNIPVH), tyrosine 401, and arginine 415. Positions 391 to 405 (PVHKWCIRHFYKPML) are amphipathic helix (AH). Residues 411–431 (KWVARTGVFLTSAFFHEYLVS) form a helical membrane-spanning segment. Histidine 426 is an active-site residue. The Lumenal portion of the chain corresponds to 432–439 (VPLRMFRL). Residues 440–458 (WAFTAMMAQVPLAWIVGRF) form a helical membrane-spanning segment. The Cytoplasmic portion of the chain corresponds to 459-460 (FQ). A helical transmembrane segment spans residues 461–492 (GNYGNAAVWVTLIIGQPVAVLMYVHDYYVLNY). Tyrosine 488 is an an acyl-CoA binding site. At 493–498 (DAPVGV) the chain is on the lumenal side.

Belongs to the membrane-bound acyltransferase family. Sterol o-acyltransferase subfamily. Homodimer or homotetramer; both forms have similar enzymatic activities.

It is found in the endoplasmic reticulum membrane. The enzyme catalyses an acyl-CoA + a 1,2-diacyl-sn-glycerol = a triacyl-sn-glycerol + CoA. The catalysed reaction is all-trans-retinol + an acyl-CoA = an all-trans-retinyl ester + CoA. It catalyses the reaction 1-octadecanoyl-2-(5Z,8Z,11Z,14Z-eicosatetraenoyl)-sn-glycerol + (9Z)-octadecenoyl-CoA = 1-octadecanoyl-2-(5Z,8Z,11Z,14Z)-eicosatetraenoyl-3-(9Z)-octadecenoyl-sn-glycerol + CoA. It carries out the reaction hexadecane-1,2-diol + 2 hexadecanoyl-CoA = 1,2-O,O-dihexadecanoyl-1,2-hexadecanediol + 2 CoA. The enzyme catalyses hexadecane-1,2-diol + hexadecanoyl-CoA = 2-hydroxyhexadecyl hexadecanoate + CoA. The catalysed reaction is 2-(9Z-octadecenoyl)-glycerol + hexadecanoyl-CoA = 1-hexadecanoyl-2-(9Z-octadecenoyl)-sn-glycerol + CoA. It catalyses the reaction 1,2-di-(9Z-octadecenoyl)-sn-glycerol + hexadecanoyl-CoA = 1,2-di-(9Z)-octadecenoyl-3-hexadecanoyl-sn-glycerol + CoA. It carries out the reaction hexadecan-1-ol + hexadecanoyl-CoA = hexadecanyl hexadecanoate + CoA. The enzyme catalyses all-trans-retinol + hexadecanoyl-CoA = all-trans-retinyl hexadecanoate + CoA. The catalysed reaction is 13-cis-retinol + hexadecanoyl-CoA = 13-cis-retinyl hexadecanoate + CoA. It catalyses the reaction 1,2-di-(9Z-octadecenoyl)-sn-glycerol + (9Z)-octadecenoyl-CoA = 1,2,3-tri-(9Z-octadecenoyl)-glycerol + CoA. It carries out the reaction 1,3-di-(9Z-octadecenoyl)-glycerol + (9Z)-octadecenoyl-CoA = 1,2,3-tri-(9Z-octadecenoyl)-glycerol + CoA. The enzyme catalyses 2,3-di-(9Z)-octadecenoyl-sn-glycerol + (9Z)-octadecenoyl-CoA = 1,2,3-tri-(9Z-octadecenoyl)-glycerol + CoA. The catalysed reaction is 1-O-(9Z-octadecenyl)-glycerol + (9Z)-octadecenoyl-CoA = 1-O-(9Z-octadecyl)-3-(9Z-octadecenoyl)-glycerol + CoA. It catalyses the reaction 1-(9Z-octadecenoyl)-glycerol + (9Z)-octadecenoyl-CoA = 1,2-di-(9Z-octadecenoyl)-glycerol + CoA. It carries out the reaction 2-(9Z-octadecenoyl)-glycerol + (9Z)-octadecenoyl-CoA = 1,2-di-(9Z-octadecenoyl)-sn-glycerol + CoA. The enzyme catalyses 1-O-(9Z-octadecyl)-3-(9Z-octadecenoyl)-glycerol + (9Z)-octadecenoyl-CoA = 1-O-(9Z-octadecenyl)-2,3-di-(9Z-octadecenoyl)glycerol + CoA. The catalysed reaction is 1,2-di-(9Z-octadecenoyl)-glycerol + (9Z)-octadecenoate + H(+) = 1,2,3-tri-(9Z-octadecenoyl)-glycerol + H2O. Its pathway is lipid metabolism; glycerolipid metabolism. In terms of biological role, catalyzes the terminal and only committed step in triacylglycerol synthesis by using diacylglycerol and fatty acyl CoA as substrates. Highly expressed in epithelial cells of the small intestine and its activity is essential for the absorption of dietary fats. In liver, plays a role in esterifying exogenous fatty acids to glycerol, and is required to synthesize fat for storage. Also present in female mammary glands, where it produces fat in the milk. May be involved in VLDL (very low density lipoprotein) assembly. In contrast to DGAT2 it is not essential for survival. Functions as the major acyl-CoA retinol acyltransferase (ARAT) in the skin, where it acts to maintain retinoid homeostasis and prevent retinoid toxicity leading to skin and hair disorders. Exhibits additional acyltransferase activities, includin acyl CoA:monoacylglycerol acyltransferase (MGAT), wax monoester and wax diester synthases. Also able to use 1-monoalkylglycerol (1-MAkG) as an acyl acceptor for the synthesis of monoalkyl-monoacylglycerol (MAMAG). This is Diacylglycerol O-acyltransferase 1 from Mus musculus (Mouse).